The sequence spans 207 residues: Small ribosomal subunit protein uS4 (207 aa).

The span at 29-38 shows a compositional bias: basic and acidic residues; the sequence is SDKAKFDSKP. Positions 29–54 are disordered; it reads SDKAKFDSKPGQHGRTSGTRTSDYGL. A compositionally biased stretch (polar residues) spans 42 to 52; that stretch reads GRTSGTRTSDY. Residues 97 to 160 form the S4 RNA-binding domain; the sequence is SRLDNVVYRM…KKQTRIAEAL (64 aa).

This sequence belongs to the universal ribosomal protein uS4 family. As to quaternary structure, part of the 30S ribosomal subunit. Contacts protein S5. The interaction surface between S4 and S5 is involved in control of translational fidelity.

Functionally, one of the primary rRNA binding proteins, it binds directly to 16S rRNA where it nucleates assembly of the body of the 30S subunit. Its function is as follows. With S5 and S12 plays an important role in translational accuracy. The polypeptide is Small ribosomal subunit protein uS4 (Polaromonas naphthalenivorans (strain CJ2)).